The primary structure comprises 359 residues: Probable NAD(P)H nitroreductase PigM (359 aa).

It belongs to the nitroreductase family. FMN serves as cofactor.

The protein operates within antibiotic biosynthesis; prodigiosin biosynthesis. In terms of biological role, involved in the biosynthesis of 4-methoxy-2,2'-bipyrrole-5-carbaldehyde (MBC), one of the terminal products involved in the biosynthesis of the red antibiotic prodigiosin (Pig). Catalyzes the oxidation of the hydroxy group of 4-hydroxy-2,2'-bipyrrole-5-methanol (HBM) to yield 4-methoxy-2,2'-bipyrrole-5-carbaldehyde (MBC). This Serratia sp. (strain ATCC 39006) (Prodigiosinella confusarubida) protein is Probable NAD(P)H nitroreductase PigM.